A 401-amino-acid polypeptide reads, in one-letter code: Nicotinate phosphoribosyltransferase (401 aa).

H224 bears the Phosphohistidine; by autocatalysis mark.

Belongs to the NAPRTase family. Post-translationally, transiently phosphorylated on a His residue during the reaction cycle. Phosphorylation strongly increases the affinity for substrates and increases the rate of nicotinate D-ribonucleotide production. Dephosphorylation regenerates the low-affinity form of the enzyme, leading to product release.

The enzyme catalyses nicotinate + 5-phospho-alpha-D-ribose 1-diphosphate + ATP + H2O = nicotinate beta-D-ribonucleotide + ADP + phosphate + diphosphate. Its pathway is cofactor biosynthesis; NAD(+) biosynthesis; nicotinate D-ribonucleotide from nicotinate: step 1/1. In terms of biological role, catalyzes the synthesis of beta-nicotinate D-ribonucleotide from nicotinate and 5-phospho-D-ribose 1-phosphate at the expense of ATP. The chain is Nicotinate phosphoribosyltransferase from Pseudomonas putida (strain ATCC 700007 / DSM 6899 / JCM 31910 / BCRC 17059 / LMG 24140 / F1).